The chain runs to 678 residues: MSTQNGMYYSLLEWFKTLNLNAPHANAEELADGVALAQALNQFAPESFTNSWLSKIKSSAVGGNWRLRMSNLKKVVEGVYEYYSDVLNYTLQHDFVKPDVQAIAEKCDLSELERLLQLVLGCAVNCAKKQSYICEIMCLEEELQANIMRALQELESSTRQTTEGGVVSSLSRNSLSGMLDGNAKALEERDAMAQKCFETEKKMLLLIDEKTNLQQELHKLQLEFARLEHNTIGDDGVSLGPIQAGSVRYNELRRQLELVKEELLQSEGAREDLKIKAQQQETDLLHMQQRIDELMKSTAELTALKDEVDVLRESTDKLKVCEAQLETYKKKLEEYNDLKKHVKMLEERSADYVQQNAQFEEDAKRYANTKGQVELFKKEIQDLHAQLDNESSKNVKLEFDNKNLESKTLALQREKDNLLKERDNLREAFDELKCGQLSTNSGSLTGTTMSRELQPPAMMDKMQRLEAENKALREGQGGQTALAQLLDDANKRCEHLREQLKTANERILSLSHASQSDDPILKENEFSKQIKQLMELNEQKTLQIEESATQNSTMQCKITQLESTLATREQELMAYEVKYRKCIERAKEVIKNIDPRIASVMEANNLEKSVDVIEEESKTKMSGMEEQLMASAFYRLGVNAQRDAVDSKLALLMGSGQTFLARQRQSAPRKPLTTMKSK.

Positions 1–155 (MSTQNGMYYS…NIMRALQELE (155 aa)) are interaction with microtubules. Positions 5-123 (NGMYYSLLEW…RLLQLVLGCA (119 aa)) constitute a Calponin-homology (CH) domain. 2 coiled-coil regions span residues 135–435 (EIMC…LKCG) and 479–589 (QTAL…AKEV).

It belongs to the hook family. In terms of assembly, homodimer. Interacts with microtubules via its N-terminus.

Its subcellular location is the cytoplasm. It localises to the cytoskeleton. The protein localises to the endosome. It is found in the synapse. Functionally, involved in endocytic trafficking by stabilizing organelles of the endocytic pathway. Probably acts as a cytoskeletal linker protein required to tether endosome vesicles to the cytoskeleton. Involved in modulation of endocytosis at stages required for down-regulation of membrane proteins that control synapse size. Not involved in synaptic vesicle recycling. Required in R7 cells for boss endocytosis into multivesicular bodies (MVBs). Has a role in regulating adult longevity. The polypeptide is Protein hook (Drosophila virilis (Fruit fly)).